The chain runs to 294 residues: 4-diphosphocytidyl-2-C-methyl-D-erythritol kinase (294 aa).

Residue lysine 19 is part of the active site. 106–116 (PVASGIGGGSA) is a binding site for ATP. Aspartate 148 is an active-site residue.

Belongs to the GHMP kinase family. IspE subfamily.

It carries out the reaction 4-CDP-2-C-methyl-D-erythritol + ATP = 4-CDP-2-C-methyl-D-erythritol 2-phosphate + ADP + H(+). It participates in isoprenoid biosynthesis; isopentenyl diphosphate biosynthesis via DXP pathway; isopentenyl diphosphate from 1-deoxy-D-xylulose 5-phosphate: step 3/6. In terms of biological role, catalyzes the phosphorylation of the position 2 hydroxy group of 4-diphosphocytidyl-2C-methyl-D-erythritol. This chain is 4-diphosphocytidyl-2-C-methyl-D-erythritol kinase, found in Rhizobium etli (strain ATCC 51251 / DSM 11541 / JCM 21823 / NBRC 15573 / CFN 42).